Here is a 115-residue protein sequence, read N- to C-terminus: MKMVVVIRNDLGMGKGKMVAQGGHAIIEAFLDAKRKNPRAVDEWLREGQKKVVVKVNSEKELIDIYNKARSEGLPCSIIRDAGHTQLEPGTLTAVAIGPEKDEKIDKITGHLKLL.

The protein belongs to the PTH2 family.

Its subcellular location is the cytoplasm. The enzyme catalyses an N-acyl-L-alpha-aminoacyl-tRNA + H2O = an N-acyl-L-amino acid + a tRNA + H(+). Functionally, the natural substrate for this enzyme may be peptidyl-tRNAs which drop off the ribosome during protein synthesis. The protein is Peptidyl-tRNA hydrolase of Methanocaldococcus jannaschii (strain ATCC 43067 / DSM 2661 / JAL-1 / JCM 10045 / NBRC 100440) (Methanococcus jannaschii).